The following is a 92-amino-acid chain: Elongation factor 1-beta (92 aa).

Belongs to the EF-1-beta/EF-1-delta family.

In terms of biological role, promotes the exchange of GDP for GTP in EF-1-alpha/GDP, thus allowing the regeneration of EF-1-alpha/GTP that could then be used to form the ternary complex EF-1-alpha/GTP/AAtRNA. The protein is Elongation factor 1-beta of Hyperthermus butylicus (strain DSM 5456 / JCM 9403 / PLM1-5).